The sequence spans 249 residues: Methyl-coenzyme M reductase subunit gamma (249 aa).

The disordered stretch occupies residues 43 to 62; it reads RAPGEEYPSVHPPLEELDEP. Arg-120 is a binding site for coenzyme M.

This sequence belongs to the methyl-coenzyme M reductase gamma subunit family. MCR is a hexamer of two alpha, two beta, and two gamma chains, forming a dimer of heterotrimers. The cofactor is coenzyme F430.

Its subcellular location is the cytoplasm. The enzyme catalyses coenzyme B + methyl-coenzyme M = methane + coenzyme M-coenzyme B heterodisulfide. It participates in one-carbon metabolism; methyl-coenzyme M reduction; methane from methyl-coenzyme M: step 1/1. Its function is as follows. Component of the methyl-coenzyme M reductase (MCR) I that catalyzes the reductive cleavage of methyl-coenzyme M (CoM-S-CH3 or 2-(methylthio)ethanesulfonate) using coenzyme B (CoB or 7-mercaptoheptanoylthreonine phosphate) as reductant which results in the production of methane and the mixed heterodisulfide of CoB and CoM (CoM-S-S-CoB). This is the final step in methanogenesis. This chain is Methyl-coenzyme M reductase subunit gamma (mcrG), found in Methanothermus fervidus.